We begin with the raw amino-acid sequence, 371 residues long: Dual-specificity RNA methyltransferase RlmN (371 aa).

E99 functions as the Proton acceptor in the catalytic mechanism. A Radical SAM core domain is found at 106-333 (DDNRATLCIS…AIRRASKGQD (228 aa)). Cysteines 113 and 338 form a disulfide. Residues C120, C124, and C127 each contribute to the [4Fe-4S] cluster site. Residues 165–166 (GE), S197, 219–221 (SLN), and N295 each bind S-adenosyl-L-methionine. C338 acts as the S-methylcysteine intermediate in catalysis. Residues 345 to 371 (LTVSPPAQESERNSARPDRSQGKGKHL) are disordered. The span at 353 to 365 (ESERNSARPDRSQ) shows a compositional bias: basic and acidic residues.

The protein belongs to the radical SAM superfamily. RlmN family. It depends on [4Fe-4S] cluster as a cofactor.

The protein resides in the cytoplasm. The enzyme catalyses adenosine(2503) in 23S rRNA + 2 reduced [2Fe-2S]-[ferredoxin] + 2 S-adenosyl-L-methionine = 2-methyladenosine(2503) in 23S rRNA + 5'-deoxyadenosine + L-methionine + 2 oxidized [2Fe-2S]-[ferredoxin] + S-adenosyl-L-homocysteine. It catalyses the reaction adenosine(37) in tRNA + 2 reduced [2Fe-2S]-[ferredoxin] + 2 S-adenosyl-L-methionine = 2-methyladenosine(37) in tRNA + 5'-deoxyadenosine + L-methionine + 2 oxidized [2Fe-2S]-[ferredoxin] + S-adenosyl-L-homocysteine. Specifically methylates position 2 of adenine 2503 in 23S rRNA and position 2 of adenine 37 in tRNAs. m2A2503 modification seems to play a crucial role in the proofreading step occurring at the peptidyl transferase center and thus would serve to optimize ribosomal fidelity. The protein is Dual-specificity RNA methyltransferase RlmN of Syntrophotalea carbinolica (strain DSM 2380 / NBRC 103641 / GraBd1) (Pelobacter carbinolicus).